The following is a 140-amino-acid chain: Small ribosomal subunit protein bS6 (140 aa).

Residues 111–140 (EHFTGPAGAEGSDDESTESTDEAVAETADA) form a disordered region. The segment covering 121-140 (GSDDESTESTDEAVAETADA) has biased composition (acidic residues).

It belongs to the bacterial ribosomal protein bS6 family.

Functionally, binds together with bS18 to 16S ribosomal RNA. The sequence is that of Small ribosomal subunit protein bS6 from Rhodopirellula baltica (strain DSM 10527 / NCIMB 13988 / SH1).